We begin with the raw amino-acid sequence, 156 residues long: Transcriptional repressor NrdR (156 aa).

A zinc finger lies at 3–34; the sequence is CPFCGNVDTQVKDSRPAEDHVAIRRRRFCPAC. One can recognise an ATP-cone domain in the interval 49-139; sequence LVVIKSNGKR…VYKNFQATGD (91 aa).

It belongs to the NrdR family. It depends on Zn(2+) as a cofactor.

Negatively regulates transcription of bacterial ribonucleotide reductase nrd genes and operons by binding to NrdR-boxes. The protein is Transcriptional repressor NrdR of Jannaschia sp. (strain CCS1).